The sequence spans 353 residues: Photosystem II D2 protein (353 aa).

Thr-2 bears the N-acetylthreonine mark. Thr-2 carries the post-translational modification Phosphothreonine. A helical membrane pass occupies residues 41 to 61; it reads CAYFALGGWFTGTTFVTSWYT. His-118 contributes to the chlorophyll a binding site. Residues 125-141 form a helical membrane-spanning segment; the sequence is GFMLRQFELARSVQLRP. 2 residues coordinate pheophytin a: Gln-130 and Asn-143. A helical membrane pass occupies residues 153–166; the sequence is VFVSVFLIYPLGQS. His-198 provides a ligand contact to chlorophyll a. Residues 208–228 traverse the membrane as a helical segment; sequence AALLCAIHGATVENTLFEDGD. His-215 and Phe-262 together coordinate a plastoquinone. Position 215 (His-215) interacts with Fe cation. His-269 contributes to the Fe cation binding site. Residues 279–295 form a helical membrane-spanning segment; it reads GLWMSALGVVGLALNLR.

The protein belongs to the reaction center PufL/M/PsbA/D family. In terms of assembly, PSII is composed of 1 copy each of membrane proteins PsbA, PsbB, PsbC, PsbD, PsbE, PsbF, PsbH, PsbI, PsbJ, PsbK, PsbL, PsbM, PsbT, PsbX, PsbY, PsbZ, Psb30/Ycf12, at least 3 peripheral proteins of the oxygen-evolving complex and a large number of cofactors. It forms dimeric complexes. The D1/D2 heterodimer binds P680, chlorophylls that are the primary electron donor of PSII, and subsequent electron acceptors. It shares a non-heme iron and each subunit binds pheophytin, quinone, additional chlorophylls, carotenoids and lipids. There is also a Cl(-1) ion associated with D1 and D2, which is required for oxygen evolution. The PSII complex binds additional chlorophylls, carotenoids and specific lipids. is required as a cofactor.

The protein resides in the plastid. It localises to the chloroplast thylakoid membrane. The catalysed reaction is 2 a plastoquinone + 4 hnu + 2 H2O = 2 a plastoquinol + O2. Functionally, photosystem II (PSII) is a light-driven water:plastoquinone oxidoreductase that uses light energy to abstract electrons from H(2)O, generating O(2) and a proton gradient subsequently used for ATP formation. It consists of a core antenna complex that captures photons, and an electron transfer chain that converts photonic excitation into a charge separation. The D1/D2 (PsbA/PsbD) reaction center heterodimer binds P680, the primary electron donor of PSII as well as several subsequent electron acceptors. D2 is needed for assembly of a stable PSII complex. In Populus deltoides (Eastern poplar), this protein is Photosystem II D2 protein.